The primary structure comprises 207 residues: UPF0328 protein ECU02_1590/ECU04_0060/ECU08_2120 (207 aa).

Disordered stretches follow at residues 1-154 (MPRP…HSHT) and 180-207 (GRLH…LATL). Basic and acidic residues-rich tracts occupy residues 14–24 (DHPDFRSESSA) and 75–97 (HTEG…ETES). Polar residues-rich tracts occupy residues 98 to 121 (PKPQ…SQNT) and 133 to 149 (SRPS…QSPH).

It belongs to the UPF0328 family.

The chain is UPF0328 protein ECU02_1590/ECU04_0060/ECU08_2120 from Encephalitozoon cuniculi (strain GB-M1) (Microsporidian parasite).